Consider the following 193-residue polypeptide: Cysteine and glycine-rich protein 1 (193 aa).

In terms of domain architecture, LIM zinc-binding 1 spans 10-61 (CGVCQKTVYFAEEVQCEGNSFHKSCFLCMVCKKNLDSTTVAVHGEEIYCKSC). A Nuclear localization signal motif is present at residues 64–69 (KKYGPK). Position 81 is a phosphoserine (Ser-81). Lys-84 carries the post-translational modification N6-acetyllysine. Lys-91 is covalently cross-linked (Glycyl lysine isopeptide (Lys-Gly) (interchain with G-Cter in SUMO2)). Lys-112, Lys-131, Lys-137, and Lys-161 each carry N6-acetyllysine. The 52-residue stretch at 119–170 (CPRCSQAVYAAEKVIGAGKSWHKSCFRCAKCGKGLESTTLADKDGEIYCKGC) folds into the LIM zinc-binding 2 domain. Position 192 is a phosphoserine (Ser-192).

As to quaternary structure, interacts with ASCC1; ASCC2 and TRIP4.

It is found in the nucleus. Functionally, could play a role in neuronal development. The sequence is that of Cysteine and glycine-rich protein 1 (Csrp1) from Rattus norvegicus (Rat).